We begin with the raw amino-acid sequence, 278 residues long: HTH-type transcriptional activator RhaS (278 aa).

Residues 174 to 272 (NLLLAWLEDH…NWSPRDIRQG (99 aa)) form the HTH araC/xylS-type domain. DNA-binding regions (H-T-H motif) lie at residues 191–212 (DAVA…KQQT) and 239–262 (VTDI…RREF).

In terms of assembly, binds DNA as a dimer.

The protein localises to the cytoplasm. In terms of biological role, activates expression of the rhaBAD and rhaT operons. The protein is HTH-type transcriptional activator RhaS of Escherichia coli (strain SE11).